Consider the following 265-residue polypeptide: Undecaprenyl-diphosphatase 1 (265 aa).

The next 7 helical transmembrane spans lie at Ile-4–Ser-24, Ala-42–His-62, Phe-84–Ile-104, Leu-108–Ala-128, Ser-184–Leu-204, Met-217–Leu-237, and Leu-245–Leu-265.

It belongs to the UppP family.

The protein localises to the cell membrane. It carries out the reaction di-trans,octa-cis-undecaprenyl diphosphate + H2O = di-trans,octa-cis-undecaprenyl phosphate + phosphate + H(+). In terms of biological role, catalyzes the dephosphorylation of undecaprenyl diphosphate (UPP). Confers resistance to bacitracin. The polypeptide is Undecaprenyl-diphosphatase 1 (Bacillus cereus (strain ZK / E33L)).